Consider the following 194-residue polypeptide: CASP-like protein Ni6 (194 aa).

The Cytoplasmic portion of the chain corresponds to 1 to 27; it reads MSSMETEKGAVPTPQAPPVAPTDNKYR. A helical membrane pass occupies residues 28–48; that stretch reads VVDVILRVLLLAASIASVVLM. Over 49-75 the chain is Extracellular; the sequence is VTSKQTEIIVSPFGSRPNAAKFQNSPA. A helical membrane pass occupies residues 76–96; that stretch reads FIYLVAALSVAGLYSIITALV. Residues 97–109 are Cytoplasmic-facing; sequence SLSYMRKPIVPPK. The chain crosses the membrane as a helical span at residues 110-130; it reads LFWILLIHDVLLLGIVAAATG. At 131–161 the chain is on the extracellular side; it reads TAGGVGYIGLKGNTHVRWGKIRNVYDKFCRH. The chain crosses the membrane as a helical span at residues 162–182; it reads VGASIIVSLFAAAVLVLLVFV. Over 183-194 the chain is Cytoplasmic; sequence NANSLYRRIPKY.

The protein belongs to the Casparian strip membrane proteins (CASP) family. As to quaternary structure, homodimer and heterodimers.

It localises to the cell membrane. The polypeptide is CASP-like protein Ni6 (Ni6) (Beta vulgaris subsp. maritima (Sea beet)).